We begin with the raw amino-acid sequence, 611 residues long: Sodium-coupled monocarboxylate transporter 1 (611 aa).

At 1 to 9 (MDASRDIGS) the chain is on the extracellular side. The chain crosses the membrane as a helical span at residues 10-30 (FVVWDYVVFAGMLLISAAIGI). Over 31–51 (YYAFAGGGQQTSKDFLMGGRS) the chain is Cytoplasmic. Residues 52–72 (MSAVPVALSLTASFMSAVTVL) form a helical membrane-spanning segment. The Extracellular segment spans residues 73-86 (GTPAEVYRFGAIFS). Residues 87-107 (IFVITYFFVVVISAEVFLPVF) form a helical membrane-spanning segment. Over 108–132 (YRLGITSTYEYLELRFNRCIRLCGT) the chain is Cytoplasmic. Residues 133–153 (ILFIVQTILYTGIVIYAPALA) form a helical membrane-spanning segment. The Extracellular portion of the chain corresponds to 154–161 (LNQVTGFD). Residues 162–182 (LWGAVVATGVVCTFYCTLGGL) traverse the membrane as a helical segment. Topologically, residues 183-184 (KA) are cytoplasmic. Residues 185–205 (VVWTDVFQVGIMVAGFASVII) traverse the membrane as a helical segment. Topologically, residues 206 to 239 (QASITQHGINKILSDAFNGGRLNFWNFDPNPLQR) are extracellular. The helical transmembrane segment at 240–260 (HTFWTIVIGGTFTWTTIYGVN) threads the bilayer. Topologically, residues 261-279 (QSQVQRYISCKSRLHAKLS) are cytoplasmic. A helical membrane pass occupies residues 280-300 (LYVNLVGLWVILTCSIFCGLA). Residues 301 to 336 (LYSRYRECDPWTSKKVSAIDQLMPYLVLDILKNYPG) lie on the Extracellular side of the membrane. The chain crosses the membrane as a helical span at residues 337–359 (VPGLFVACAYSGTLSTVSSSINA). The Cytoplasmic portion of the chain corresponds to 360–389 (LAAVTVEDLIKPRFKSLSEKSLSWISQGMS). A helical membrane pass occupies residues 390–410 (VLYGALCIGMAALASLMGALL). Over 411–415 (QAALS) the chain is Extracellular. Residues 416-436 (IFGMVGGPLLGLFSLGILVPF) traverse the membrane as a helical segment. Residues 437-439 (ANS) lie on the Cytoplasmic side of the membrane. The chain crosses the membrane as a helical span at residues 440–460 (IGALTGLLAGFAISLWVGIGA). At 461 to 518 (QLYPPLPERTLPLPLETYGCNITHNGSDWMSTTEMPFSTSAFQIHNAERTPLMDNWYS) the chain is on the extracellular side. An N-linked (GlcNAc...) asparagine glycan is attached at asparagine 485. The helical transmembrane segment at 519–539 (LSYLYFSTIGTLTTLFVGILI) threads the bilayer. The Cytoplasmic portion of the chain corresponds to 540–611 (SLSTGGRKQN…HSGKINGTRL (72 aa)). The short motif at 609–611 (TRL) is the PDZ-binding element.

Belongs to the sodium:solute symporter (SSF) (TC 2.A.21) family. In terms of assembly, interacts (via PDZ-binding motif) with PDZK1 (via PDZ domains 1 and 3); interaction increases nicotinate transport activity of SLC5A8. As to expression, expressed in brain, colon, kidney and in the ileum and jejunum of small intestine. In the kidney, expression occurred in the proximal tubule and the loop of Henle, being restricted to tubular epithelial cells in both the cortex and the medulla. In the colon, predominantly expressed in the distal half of the large bowel and in the most terminal ileum. Localized selectively in the luminal surface of crypts in the large intestine and to the brush border in the middle parts of crypts in the cecum. In the brain, expression was seen throughout, exclusively in neurons, including the cortex, hippocampus, cerebellum and pituitary gland (at protein level). Expression is reduced in oligodendrogliomas.

The protein localises to the apical cell membrane. The catalysed reaction is (S)-lactate(out) + 2 Na(+)(out) = (S)-lactate(in) + 2 Na(+)(in). It carries out the reaction propanoate(out) + 2 Na(+)(out) = propanoate(in) + 2 Na(+)(in). The enzyme catalyses pyruvate(out) + 2 Na(+)(out) = pyruvate(in) + 2 Na(+)(in). It catalyses the reaction acetate(out) + 2 Na(+)(out) = acetate(in) + 2 Na(+)(in). The catalysed reaction is butanoate(out) + 2 Na(+)(out) = butanoate(in) + 2 Na(+)(in). It carries out the reaction nicotinate(out) + 2 Na(+)(out) = nicotinate(in) + 2 Na(+)(in). The enzyme catalyses (R)-3-hydroxybutanoate(out) + 2 Na(+)(out) = (R)-3-hydroxybutanoate(in) + 2 Na(+)(in). It catalyses the reaction acetoacetate(out) + 2 Na(+)(out) = acetoacetate(in) + 2 Na(+)(in). The catalysed reaction is 4-methyl-2-oxopentanoate(out) + 2 Na(+)(out) = 4-methyl-2-oxopentanoate(in) + 2 Na(+)(in). It carries out the reaction 5-oxo-L-proline(out) + 2 Na(+)(out) = 5-oxo-L-proline(in) + 2 Na(+)(in). The enzyme catalyses iodide(out) = iodide(in). It catalyses the reaction chloride(in) = chloride(out). The catalysed reaction is nitrate(in) = nitrate(out). It carries out the reaction bromide(in) = bromide(out). With respect to regulation, transport of D-lactate and pyruvate stimulated by alpha-cyano-4-hydroxycinnamic acid, but inhibited by the short-chain fatty acids acetate, propionate and butyrate. Functionally, acts as an electrogenic sodium (Na(+)) and chloride (Cl-)-dependent sodium-coupled solute transporter, including transport of monocarboxylates (short-chain fatty acids including L-lactate, D-lactate, pyruvate, acetate, propionate, valerate and butyrate), mocarboxylate drugs (nicotinate, benzoate, salicylate and 5-aminosalicylate) and ketone bodies (beta-D-hydroxybutyrate, acetoacetate and alpha-ketoisocaproate), with a Na(+):substrate stoichiometry of between 4:1 and 2:1. Catalyzes passive carrier mediated diffusion of iodide. Mediates iodide transport from the thyrocyte into the colloid lumen through the apical membrane. May be responsible for the absorption of D-lactate and monocarboxylate drugs from the intestinal tract. May play a critical role in the entry of L-lactate and ketone bodies into neurons by a process driven by an electrochemical Na(+) gradient and hence contribute to the maintenance of the energy status and function of neurons. Mediates sodium-coupled electrogenic transport of pyroglutamate (5-oxo-L-proline). Can mediate the transport of chloride, bromide, iodide and nitrate ions when external concentration of sodium ions is reduced. The protein is Sodium-coupled monocarboxylate transporter 1 of Mus musculus (Mouse).